We begin with the raw amino-acid sequence, 702 residues long: Putative methyltransferase NSUN7 (702 aa).

C424 (nucleophile) is an active-site residue. Disordered stretches follow at residues 522-541 (KSSK…TKAA), 567-593 (ETVT…KHKL), and 675-702 (PTPS…RRWL). Basic residues predominate over residues 523–534 (SSKREKKKKKSK). Polar residues predominate over residues 567 to 587 (ETVTKPSLPQKNTAQVGASSQ). Residues 681-691 (RKGEKPKDDTR) show a composition bias toward basic and acidic residues.

The protein belongs to the class I-like SAM-binding methyltransferase superfamily. RsmB/NOP family.

Functionally, may have S-adenosyl-L-methionine-dependent methyl-transferase activity. The chain is Putative methyltransferase NSUN7 (NSUN7) from Macaca fascicularis (Crab-eating macaque).